A 147-amino-acid polypeptide reads, in one-letter code: UPF0735 ACT domain-containing protein RBAM_024960 (147 aa).

The 76-residue stretch at 70-145 folds into the ACT domain; that stretch reads TLFFHLEDRS…FIEKVEILGS (76 aa).

Belongs to the UPF0735 family.

The chain is UPF0735 ACT domain-containing protein RBAM_024960 from Bacillus velezensis (strain DSM 23117 / BGSC 10A6 / LMG 26770 / FZB42) (Bacillus amyloliquefaciens subsp. plantarum).